The primary structure comprises 268 residues: Protein atz-1 (268 aa).

Residues 171–243 (VDDANKLTEV…EEGEEDYEEE (73 aa)) are a coiled coil. Residues 229-268 (DLMKEEEGEEDYEEEENYEVEEDFEDEEEYDEEGEEEDYE) form a disordered region. A compositionally biased stretch (acidic residues) spans 231–268 (MKEEEGEEDYEEEENYEVEEDFEDEEEYDEEGEEEDYE).

The protein resides in the nucleus. In terms of biological role, plays a role in meiosis, germline development and oocyte morphogenesis. May play a role in DNA replication. In the germline, involved in the maintenance of transition zone nuclei and in chromosome structure and organization, but not required for mitotic proliferation. This Caenorhabditis elegans protein is Protein atz-1.